The following is a 308-amino-acid chain: Aliphatic nitrilase (308 aa).

A CN hydrolase domain is found at 4-270 (FRAAVVQAAP…ETILTADLDT (267 aa)). E44 functions as the Proton acceptor in the catalytic mechanism. Residue K130 is part of the active site. The active-site Nucleophile is the C164.

It belongs to the carbon-nitrogen hydrolase superfamily. Nitrilase family.

The catalysed reaction is a nitrile + 2 H2O = a carboxylate + NH4(+). Its function is as follows. Nitrilase that hydrolyzes preferentially phenylacetonitrile, but not (R,S)-mandelonitrile. Also acts on dinitriles like phenylenediacetonitriles (PDAs) 1,2-PDA, 1,3-PDA, and 1,4-PDA, and cyanophenyl acetonitriles (CPAs) 2-CPA and 4-CPA, but with lower activities. This chain is Aliphatic nitrilase (nit), found in Sinorhizobium fredii (strain HH103).